Reading from the N-terminus, the 486-residue chain is Glutamate--tRNA ligase (486 aa).

Residues 12-22 carry the 'HIGH' region motif; that stretch reads PSPTGTPHVGL. Residues 256 to 260 carry the 'KMSKS' region motif; the sequence is KLSKR. Lys259 provides a ligand contact to ATP.

Belongs to the class-I aminoacyl-tRNA synthetase family. Glutamate--tRNA ligase type 1 subfamily. As to quaternary structure, monomer.

It localises to the cytoplasm. It catalyses the reaction tRNA(Glu) + L-glutamate + ATP = L-glutamyl-tRNA(Glu) + AMP + diphosphate. Functionally, catalyzes the attachment of glutamate to tRNA(Glu) in a two-step reaction: glutamate is first activated by ATP to form Glu-AMP and then transferred to the acceptor end of tRNA(Glu). The polypeptide is Glutamate--tRNA ligase (Mycolicibacterium smegmatis (strain ATCC 700084 / mc(2)155) (Mycobacterium smegmatis)).